The primary structure comprises 77 residues: DNA-directed RNA polymerase subunit epsilon (77 aa).

It belongs to the RNA polymerase subunit epsilon family. As to quaternary structure, RNAP is composed of a core of 2 alpha, a beta and a beta' subunit. The core is associated with a delta subunit, and at least one of epsilon or omega. When a sigma factor is associated with the core the holoenzyme is formed, which can initiate transcription.

The catalysed reaction is RNA(n) + a ribonucleoside 5'-triphosphate = RNA(n+1) + diphosphate. A non-essential component of RNA polymerase (RNAP). This chain is DNA-directed RNA polymerase subunit epsilon, found in Streptococcus pneumoniae (strain Hungary19A-6).